A 207-amino-acid chain; its full sequence is MHQIYSCSDENIEVFTTVIPSKVSSSSRRRVKSSHHLLAKNVVIESDLYPPPRPLELLPQRCERRDTGDRRWLQTGRLQTARPPGAHPTKTPSRPVGISEPKTSNLCGNRAYGKSLIPPVARISVKAPAGAEVAAKGSEHGAVLGRGSRHLKKIAEEYPALPQGAEASLPLTGSTSCGVPGILRKMWTRHKKKSEYVGATNSAFEAD.

The interval 65–104 (RDTGDRRWLQTGRLQTARPPGAHPTKTPSRPVGISEPKTS) is disordered.

Belongs to the vexin family.

The protein resides in the cell membrane. Its subcellular location is the nucleus. Its function is as follows. Required for neurogenesis in the neural plate and retina. Strongly cooperates with neural bHLH factors to promote neurogenesis. This is Vexin from Mus musculus (Mouse).